Reading from the N-terminus, the 354-residue chain is Holliday junction branch migration complex subunit RuvB (354 aa).

Residues 4-191 (TDKLAAPARV…FGIVARLEFY (188 aa)) form a large ATPase domain (RuvB-L) region. Residues L30, R31, G72, K75, T76, T77, 138–140 (EDY), R181, Y191, and R228 contribute to the ATP site. T76 serves as a coordination point for Mg(2+). The small ATPAse domain (RuvB-S) stretch occupies residues 192 to 262 (TAEELARIVT…MADAALAMLD (71 aa)). The segment at 265–354 (RVGFDLMDRK…GDAGELFGDA (90 aa)) is head domain (RuvB-H). DNA contacts are provided by R301, R320, and R325.

This sequence belongs to the RuvB family. Homohexamer. Forms an RuvA(8)-RuvB(12)-Holliday junction (HJ) complex. HJ DNA is sandwiched between 2 RuvA tetramers; dsDNA enters through RuvA and exits via RuvB. An RuvB hexamer assembles on each DNA strand where it exits the tetramer. Each RuvB hexamer is contacted by two RuvA subunits (via domain III) on 2 adjacent RuvB subunits; this complex drives branch migration. In the full resolvosome a probable DNA-RuvA(4)-RuvB(12)-RuvC(2) complex forms which resolves the HJ.

The protein resides in the cytoplasm. It catalyses the reaction ATP + H2O = ADP + phosphate + H(+). The RuvA-RuvB-RuvC complex processes Holliday junction (HJ) DNA during genetic recombination and DNA repair, while the RuvA-RuvB complex plays an important role in the rescue of blocked DNA replication forks via replication fork reversal (RFR). RuvA specifically binds to HJ cruciform DNA, conferring on it an open structure. The RuvB hexamer acts as an ATP-dependent pump, pulling dsDNA into and through the RuvAB complex. RuvB forms 2 homohexamers on either side of HJ DNA bound by 1 or 2 RuvA tetramers; 4 subunits per hexamer contact DNA at a time. Coordinated motions by a converter formed by DNA-disengaged RuvB subunits stimulates ATP hydrolysis and nucleotide exchange. Immobilization of the converter enables RuvB to convert the ATP-contained energy into a lever motion, pulling 2 nucleotides of DNA out of the RuvA tetramer per ATP hydrolyzed, thus driving DNA branch migration. The RuvB motors rotate together with the DNA substrate, which together with the progressing nucleotide cycle form the mechanistic basis for DNA recombination by continuous HJ branch migration. Branch migration allows RuvC to scan DNA until it finds its consensus sequence, where it cleaves and resolves cruciform DNA. The chain is Holliday junction branch migration complex subunit RuvB from Cupriavidus taiwanensis (strain DSM 17343 / BCRC 17206 / CCUG 44338 / CIP 107171 / LMG 19424 / R1) (Ralstonia taiwanensis (strain LMG 19424)).